Consider the following 302-residue polypeptide: tRNA pseudouridine synthase B (302 aa).

Asp-38 serves as the catalytic Nucleophile.

It belongs to the pseudouridine synthase TruB family. Type 1 subfamily.

The catalysed reaction is uridine(55) in tRNA = pseudouridine(55) in tRNA. Its function is as follows. Responsible for synthesis of pseudouridine from uracil-55 in the psi GC loop of transfer RNAs. The polypeptide is tRNA pseudouridine synthase B (Ligilactobacillus salivarius (strain UCC118) (Lactobacillus salivarius)).